A 674-amino-acid chain; its full sequence is ATP-citrate synthase subunit 1 (674 aa).

The span at 1–10 (MPSATSTNGA) shows a compositional bias: low complexity. Positions 1–26 (MPSATSTNGANGNGNGNGASASPAPG) are disordered. ATP is bound by residues 261-281 (LLRY…EVGG) and 312-338 (FKTE…KNKS). Glutamate 278 serves as a coordination point for Mg(2+). Histidine 320 acts as the Tele-phosphohistidine intermediate in catalysis. CoA is bound at residue 339–349 (MREAGFYVPDT).

The protein belongs to the succinate/malate CoA ligase alpha subunit family. Composed of two subunits.

The protein resides in the cytoplasm. The enzyme catalyses oxaloacetate + acetyl-CoA + ADP + phosphate = citrate + ATP + CoA. Catalyzes the formation of cytosolic acetyl-CoA, which is mainly used for the biosynthesis of fatty acids and sterols. The protein is ATP-citrate synthase subunit 1 (ACL1) of Sordaria macrospora (strain ATCC MYA-333 / DSM 997 / K(L3346) / K-hell).